Consider the following 354-residue polypeptide: MLVLGIESSCDETGVALYDTERGLRAHCLHTQMAMHAEYGGVVPELASRDHIRRLVPLTEGCLAQAGASYGDIDAVAFTQGPGLGGALLAGSSYANALAFALDKPVIPVHHLEGHLLSPLLAEEKPDFPFVALLVSGGHTQIMAVRGIGDYALLGESVDDAAGEAFDKTAKLLGLPYPGGAKLSELAESGRPEAFVFPRPMIHSDDLQMSFSGLKTAVLTAVEKVRAENGADDIPEQTRNDICRAFQDAVVDVLAAKVKKALLQTGFRTVVVAGGVGANRKLRETFGNMTVQIPTPKGKPKHPSEKVSVFFPPTAYCTDNGAMIAFAGAMHLKTGREAGAFNVRPRWPLSEIVK.

Fe cation-binding residues include histidine 111 and histidine 115. Residues 134-138 (LVSGG), aspartate 167, glycine 180, and asparagine 279 contribute to the substrate site. Aspartate 319 serves as a coordination point for Fe cation.

Belongs to the KAE1 / TsaD family. Requires Fe(2+) as cofactor.

It localises to the cytoplasm. It catalyses the reaction L-threonylcarbamoyladenylate + adenosine(37) in tRNA = N(6)-L-threonylcarbamoyladenosine(37) in tRNA + AMP + H(+). Functionally, required for the formation of a threonylcarbamoyl group on adenosine at position 37 (t(6)A37) in tRNAs that read codons beginning with adenine. Is involved in the transfer of the threonylcarbamoyl moiety of threonylcarbamoyl-AMP (TC-AMP) to the N6 group of A37, together with TsaE and TsaB. TsaD likely plays a direct catalytic role in this reaction. This chain is tRNA N6-adenosine threonylcarbamoyltransferase, found in Neisseria meningitidis serogroup C / serotype 2a (strain ATCC 700532 / DSM 15464 / FAM18).